A 364-amino-acid polypeptide reads, in one-letter code: Protein FAM81A (364 aa).

Coiled-coil stretches lie at residues 75-107 (FLEEHIRNITAIVKQLNRDIEVLQEQIRARDNI), 158-189 (NKEQQAAKLILETKIKDAEGQISQLLSRVDLS), and 261-287 (ANERDVEKKLSQMSARLDKIEESQKRN). The segment at 281–300 (EESQKRNAEGQRKPDEEKVH) is disordered.

The protein belongs to the FAM81 family. Interacts with DLG4/PSD-95, GRIN2B/GLUN2B and SYNGAP1; the interactions facilitate condensate formation. As to expression, expressed in most regions of the brain (at protein level).

Its subcellular location is the postsynaptic density. It localises to the cytoplasm. Functionally, facilitates the interaction and assembly of proteins within the postsynaptic density by promoting the condensation of postsynaptic proteins via liquid-liquid phase separation. Required for neuronal activity. Accumulation at the postsynaptic density results in enlargement of dendritic spines. The chain is Protein FAM81A (Fam81a) from Mus musculus (Mouse).